The chain runs to 308 residues: Probable manganese-dependent inorganic pyrophosphatase (308 aa).

Residues His9, Asp13, Asp15, Asp75, His97, and Asp149 each contribute to the Mn(2+) site.

The protein belongs to the PPase class C family. Mn(2+) is required as a cofactor.

The protein resides in the cytoplasm. The enzyme catalyses diphosphate + H2O = 2 phosphate + H(+). This Listeria monocytogenes serotype 4b (strain CLIP80459) protein is Probable manganese-dependent inorganic pyrophosphatase.